The sequence spans 494 residues: MTRLASGVLITLLVALAGIADGSRDIAGDILKLPSEAYRFFHNGGGGAKVNDDDDSVGTRWAVLLAGSNGFWNYRHQADICHAYQLLRKGGLKDENIIVFMYDDIAFNEENPRPGVIINHPHGDDVYKGVPKDYTGEDVTVEKFFAVVLGNKTALTGGSGKVVDSGPNDHIFIFYSDHGGPGVLGMPTSRYIYADELIDVLKKKHASGNYKSLVFYLEACESGSIFEGLLLEGLNIYATTASNAEESSWGTYCPGEIPGPPPEYSTCLGDLYSIAWMEDSDIHNLRTETLHQQYELVKTRTASYNSYGSHVMQYGDIGLSKNNLFTYLGTNPANDNYTFVDENSLRPASKAVNQRDADLLHFWDKYRKAPEGTPRKAEAQKQFFEAMSHRMHVDHSIKLIGKLLFGIEKGPEILNTVRPAGQPLVDDWGCLKSLVRTFESHCGALSQYGMKHMRSLANICNTGIGKEKMAEASAQACENIPSGPWSSLDKGFSA.

The N-terminal stretch at M1–A20 is a signal peptide. N151 is a glycosylation site (N-linked (GlcNAc...) asparagine). H178 is a catalytic residue. The Nucleophile role is filled by C220. A disulfide bridge connects residues C253 and C267. Residue N336 is glycosylated (N-linked (GlcNAc...) asparagine). Cystine bridges form between C430–C460 and C442–C477.

Belongs to the peptidase C13 family. High levels are seen in the flowers, a lower level expression is seen in the leaves, while very low levels are seen in the stems and roots.

In terms of biological role, asparagine-specific endopeptidase that may be involved in processing of proteins targeted to vacuoles that accumulate during ethylene-regulated processes such as flower opening and flavedo degreening. This Citrus sinensis (Sweet orange) protein is Vacuolar-processing enzyme.